Reading from the N-terminus, the 515-residue chain is 3-[(3aS,4S,7aS)-7a-methyl-1,5-dioxo-octahydro-1H-inden-4-yl]propanoyl:CoA ligase (515 aa).

Residues 185–193, Asp398, Arg413, and Lys504 contribute to the ATP site; that span reads TSGTTGRSK.

It belongs to the ATP-dependent AMP-binding enzyme family.

The catalysed reaction is 3-[(3aS,4S,7aS)-7a-methyl-1,5-dioxo-octahydro-1H-inden-4-yl]propanoate + ATP + CoA = 3-[(3aS,4S,7aS)-7a-methyl-1,5-dioxo-octahydro-1H-inden-4-yl]propanoyl-CoA + AMP + diphosphate. Functionally, involved in the catabolism of the rings C and D of cholesterol. Catalyzes the ATP-dependent CoA thioesterification of 3aalpha-H-4alpha(3'-propanoate)-7abeta-methylhexahydro-1,5-indanedione (HIP). This is 3-[(3aS,4S,7aS)-7a-methyl-1,5-dioxo-octahydro-1H-inden-4-yl]propanoyl:CoA ligase from Rhodococcus jostii (strain RHA1).